A 750-amino-acid polypeptide reads, in one-letter code: MIIRSPKPEVKIVVERDPVKTSFEKWAKPGHFSKTLAKGPDTTTWIWNLHADAHDFDSHTKDLEEISRKVFSAHFGQLAIIFIWLSGMYFHGARFSNYEAWLADPTHIKPSAQVVWPIVGQEILNGDVGGGFRGIQITSGFFQLWRASGITSELQLYCTAIGALIFAALMLFAGWFHYHKAAPELAWFQDVESMLNHHLAGLLGLGSLSWAGHQIHVSLPINQLLDAGVDPKEIPLPHEFILNRDLLAQLYPSFAKGLTPFFTLNWSEYSDFLTFRGGLNPVTGGLWLTDTAHHHLAIAVLFLIAGHMYKTNWRIGHNLKDILEAHKGPFTGEGHKGLYEILTTSWHAQLAINLAMLGSLTIIVAHHMYSMPPYPYLAIDYGTQLSLFTHHMWIGGFIIVGAAAHAAIFMVRDYDPTTQYNNLLDRVLRHRDAIVSHLNWVCIFLGFHSFGLYIHNDTMSALGRPQDMFSDTAIQLQPIFAQWIQNTHASAPGSTAPGATASTSLTWGGGDLVTVGSKVALLPIPLGTADFLVHHIHAFTIHVTVLILLKGVLFARSSRLIPDKANLGFRFPCDGPGRGGTCQVSAWDHVFLGLFWMYNAISVVIFHFSWKMQSDVWGSISDQGVVTHITGGNFAQSSITINGWLRDFLWAQASQVIQSYGSSLSAYGLLFLGAHFVWAFSLMFLFSGRGYWQELIESIVWAHNKLKVAPAIQPRALSIVQGRAVGVAHYLLGGIVTTWAFFLARIIAVG.

8 consecutive transmembrane segments (helical) span residues 70-93, 156-179, 195-219, 291-309, 346-369, 385-411, 433-455, and 531-549; these read VFSA…FHGA, LYCT…FHYH, LNHH…HVSL, TAHH…GHMY, WHAQ…HHMY, LSLF…IFMV, AIVS…LYIH, and FLVH…LILL. 2 residues coordinate [4Fe-4S] cluster: C573 and C582. 2 helical membrane passes run 589–610 and 664–686; these read HVFL…HFSW and LSAY…MFLF. H675 serves as a coordination point for chlorophyll a'. Residues M683 and Y691 each coordinate chlorophyll a. W692 lines the phylloquinone pocket. Residues 724–744 form a helical membrane-spanning segment; that stretch reads AVGVAHYLLGGIVTTWAFFLA.

The protein belongs to the PsaA/PsaB family. In terms of assembly, the PsaA/B heterodimer binds the P700 chlorophyll special pair and subsequent electron acceptors. PSI consists of a core antenna complex that captures photons, and an electron transfer chain that converts photonic excitation into a charge separation. The eukaryotic PSI reaction center is composed of at least 11 subunits. The cofactor is P700 is a chlorophyll a/chlorophyll a' dimer, A0 is one or more chlorophyll a, A1 is one or both phylloquinones and FX is a shared 4Fe-4S iron-sulfur center..

It localises to the plastid. Its subcellular location is the chloroplast thylakoid membrane. The catalysed reaction is reduced [plastocyanin] + hnu + oxidized [2Fe-2S]-[ferredoxin] = oxidized [plastocyanin] + reduced [2Fe-2S]-[ferredoxin]. Functionally, psaA and PsaB bind P700, the primary electron donor of photosystem I (PSI), as well as the electron acceptors A0, A1 and FX. PSI is a plastocyanin-ferredoxin oxidoreductase, converting photonic excitation into a charge separation, which transfers an electron from the donor P700 chlorophyll pair to the spectroscopically characterized acceptors A0, A1, FX, FA and FB in turn. Oxidized P700 is reduced on the lumenal side of the thylakoid membrane by plastocyanin. The chain is Photosystem I P700 chlorophyll a apoprotein A1 from Pinus koraiensis (Korean pine).